Reading from the N-terminus, the 296-residue chain is Transcription repressor OFP3 (296 aa).

Disordered regions lie at residues 27–115 and 131–196; these read MSRS…SANA and PSDQ…AHSS. Residues 60 to 69 show a composition bias toward polar residues; it reads LSSTAHHPQA. The segment covering 78-88 has biased composition (basic residues); that stretch reads SFKRKIKRKTV. Low complexity predominate over residues 92–115; it reads SSRLKLSTSSSLNHRSKSSSSANA. The segment covering 136-159 has biased composition (basic and acidic residues); that stretch reads FVHDPEPHSSIDIKDELSVRKLDD. The OVATE domain maps to 228 to 287; it reads IVLSSVDPEKDFRESMVEMIMENKMREQKDLEDLLACYLSLNSSEYHDVIIKAFENTWLH.

As to quaternary structure, interacts with BLH1, BLH3, KNAT5 and KNAT7.

It is found in the nucleus. In terms of biological role, transcriptional repressor that may regulate multiple aspects of plant growth and development through the regulation of BEL1-LIKE (BLH) and KNOX TALE (KNAT) homeodomain transcription factors. The chain is Transcription repressor OFP3 (OFP3) from Arabidopsis thaliana (Mouse-ear cress).